Here is a 936-residue protein sequence, read N- to C-terminus: Pre-rRNA-processing protein FHL1 (936 aa).

Disordered stretches follow at residues 1 to 90 and 139 to 169; these read MDGE…NGNL and DHSR…QDNT. The segment covering 9-29 has biased composition (polar residues); sequence ESSNHVGTSSPTTETQFTIDS. Residue S44 is modified to Phosphoserine. Over residues 139–150 the composition is skewed to basic and acidic residues; that stretch reads DHSREVSSKEDI. Residue S228 is modified to Phosphoserine. Phosphothreonine occurs at positions 230 and 247. The span at 243–257 shows a compositional bias: polar residues; the sequence is PPQNTVTENNSTDAE. Residues 243-270 form a disordered region; sequence PPQNTVTENNSTDAETTQRKLSEPIDAS. Position 264 is a phosphoserine (S264). Positions 300–357 constitute an FHA domain; the sequence is AIIGRRSENDFSHKVDVNLGPSKSISRRHAQIFYNFGTGRFELSIIGKNGAFVDDIFV. Positions 384-395 are enriched in basic and acidic residues; that stretch reads EQERNDDSKSPE. The disordered stretch occupies residues 384-442; it reads EQERNDDSKSPENADIAESEINTRNLKKNEPKSKKKITTGAKPKKAQTKPAVKKEKKPP. Basic residues predominate over residues 416-430; sequence SKKKITTGAKPKKAQ. The fork-head DNA-binding region spans 460 to 552; that stretch reads TKPTVSYSAM…ERQKKKQSEI (93 aa). The disordered stretch occupies residues 718–936; the sequence is AKAQHSKPIR…EVNVSLEEKL (219 aa). Composition is skewed to polar residues over residues 742–753 and 765–777; these read SQLSASASSHPN and DPSS…QPRQ. Composition is skewed to low complexity over residues 779–795 and 815–853; these read ARAT…AAAS and ESGT…TSSE. The span at 854–863 shows a compositional bias: acidic residues; the sequence is SESESDSGSE. Residues 864–911 are compositionally biased toward basic and acidic residues; sequence VDEKNNKNEKIDSESIKNNESKDDIPSKDENSSNDNREISKTDEEGHD.

The protein localises to the nucleus. Functionally, acts as a transcriptional regulator that recruits coactivator IFH1 to the promoters of ribosomal protein genes. Recruited to ribosomal gene promoters by RAP1. The protein is Pre-rRNA-processing protein FHL1 (FHL1) of Saccharomyces cerevisiae (strain ATCC 204508 / S288c) (Baker's yeast).